Reading from the N-terminus, the 387-residue chain is Mitochondrial import inner membrane translocase subunit TIM50 (387 aa).

A mitochondrion-targeting transit peptide spans 1–26; it reads MSAVSVYPMCVRASRGLLRLRQGARC. Residues 27-100 lie on the Mitochondrial matrix side of the membrane; sequence STAPPLLDVV…QKENTAYAKK (74 aa). Positions 61–93 are disordered; it reads LQQQQKSQEQPPPEGEDSGHKQDEQGEDKKQKE. Positions 77 to 93 are enriched in basic and acidic residues; the sequence is DSGHKQDEQGEDKKQKE. Residues 101 to 121 form a helical membrane-spanning segment; sequence MVLRLAGIMGLGGTVGIVYIF. Topologically, residues 122–387 are mitochondrial intermembrane; it reads GSNSVDEQGN…AGRFWSRKQQ (266 aa). Residues 178–321 form the FCP1 homology domain; the sequence is YYQPPYTLVL…YDLAAFLKTI (144 aa).

The protein belongs to the TIM50 family. Component of the TIM23 complex at least composed of timm23, timm17 and timm50.

Its subcellular location is the mitochondrion inner membrane. Functionally, essential component of the TIM23 complex, a complex that mediates the translocation of transit peptide-containing proteins across the mitochondrial inner membrane. The sequence is that of Mitochondrial import inner membrane translocase subunit TIM50 (timm50) from Danio rerio (Zebrafish).